The following is a 693-amino-acid chain: Polyribonucleotide nucleotidyltransferase (693 aa).

Residues Asp-489 and Asp-495 each coordinate Mg(2+). The region spanning 556-615 is the KH domain; sequence PQIHVMNINPAKIKDVVGRGGATVKGIVEKTGAQIDTSDSGEVKVFAKDKKSMDMAVAMI. The 69-residue stretch at 625–693 folds into the S1 motif domain; the sequence is GQVYKGKIVK…GRVKLSLVAR (69 aa).

Belongs to the polyribonucleotide nucleotidyltransferase family. In terms of assembly, component of the RNA degradosome, which is a multiprotein complex involved in RNA processing and mRNA degradation. The cofactor is Mg(2+).

It localises to the cytoplasm. It catalyses the reaction RNA(n+1) + phosphate = RNA(n) + a ribonucleoside 5'-diphosphate. Its function is as follows. Involved in mRNA degradation. Catalyzes the phosphorolysis of single-stranded polyribonucleotides processively in the 3'- to 5'-direction. The protein is Polyribonucleotide nucleotidyltransferase of Francisella tularensis subsp. holarctica (strain FTNF002-00 / FTA).